A 502-amino-acid polypeptide reads, in one-letter code: Probable glycine dehydrogenase (decarboxylating) subunit 2 (502 aa).

Residue Lys273 is modified to N6-(pyridoxal phosphate)lysine.

It belongs to the GcvP family. C-terminal subunit subfamily. As to quaternary structure, the glycine cleavage system is composed of four proteins: P, T, L and H. In this organism, the P 'protein' is a heterodimer of two subunits. Requires pyridoxal 5'-phosphate as cofactor.

The enzyme catalyses N(6)-[(R)-lipoyl]-L-lysyl-[glycine-cleavage complex H protein] + glycine + H(+) = N(6)-[(R)-S(8)-aminomethyldihydrolipoyl]-L-lysyl-[glycine-cleavage complex H protein] + CO2. Functionally, the glycine cleavage system catalyzes the degradation of glycine. The P protein binds the alpha-amino group of glycine through its pyridoxal phosphate cofactor; CO(2) is released and the remaining methylamine moiety is then transferred to the lipoamide cofactor of the H protein. In Thermococcus gammatolerans (strain DSM 15229 / JCM 11827 / EJ3), this protein is Probable glycine dehydrogenase (decarboxylating) subunit 2.